The primary structure comprises 350 residues: MGLFSRKRDHTPAVPKEKLIPCDKIFLDPPAKYGNAPLLEPISEDQNEKYRAVLRHFQDDDLKLPENLNDLDNGTHANDRPLSDWEKFWLSRECFLRYLRANKWNTANAIKGLTKTLVWRREIGLTHGKEDKDPLTADKVAVENETGKQVILGFDNAKRPLYYMKNGRQNTESSFRQVQELVYMMETATTVAPQGVEKITVLVDFKSYKEPGIITDKAPPISIARMCLNVMQDHYPERLAKCVLINIPWFAWAFLKMMYPFLDPATKAKAIFDEPFENHIEPSQLDALYNGLLDFKYKHEVYWPDMVKKVDDLRLKRFDRFLKFGGIVGLSEYDTKGQHDELKYPVDMVI.

Residues 139 to 297 (KVAVENETGK…LYNGLLDFKY (159 aa)) enclose the CRAL-TRIO domain.

As to quaternary structure, interacts with phosphatidylserine decarboxylase PSD2. Also interacts with PBI1.

The protein localises to the cytoplasm. Its subcellular location is the microsome. The catalysed reaction is a 1,2-diacyl-sn-glycero-3-phospho-(1D-myo-inositol)(in) = a 1,2-diacyl-sn-glycero-3-phospho-(1D-myo-inositol)(out). Its function is as follows. Has phosphatidylinositol transfer activity. Involved in the regulation of the phospholipid composition of plasma- and endomembranes. Altering plasma membrane composition may provide a possible mechanism for multidrug resistance. Contributes to efficient phospholipase D1 activation and phospholipase B1 inhibition in the regulation of phospholipid turnover. Forms a complex with phosphatidylserine decarboxylase PSD2 that seems essential for maintenance of vacuolar phosphatidylethanolamine (PE) levels. Allows interorganelle phosphatidylserine (PtdSer) transport via a process that involves the acceptor membrane complex PDR17-PDS2 that binds to PBI1 which in turn ligates to SCS2 and phosphatidic acid present in the donor membrane, forming a zone of apposition that facilitates PtdSer transfer. The sequence is that of Phosphatidylinositol transfer protein PDR17 from Saccharomyces cerevisiae (strain ATCC 204508 / S288c) (Baker's yeast).